The primary structure comprises 332 residues: Methylthioribose-1-phosphate isomerase (332 aa).

Residues 44–46 (RGA), arginine 87, and glutamine 192 contribute to the substrate site. The active-site Proton donor is aspartate 233. Position 243–244 (243–244 (NK)) interacts with substrate.

The protein belongs to the eIF-2B alpha/beta/delta subunits family. MtnA subfamily.

The enzyme catalyses 5-(methylsulfanyl)-alpha-D-ribose 1-phosphate = 5-(methylsulfanyl)-D-ribulose 1-phosphate. It participates in amino-acid biosynthesis; L-methionine biosynthesis via salvage pathway; L-methionine from S-methyl-5-thio-alpha-D-ribose 1-phosphate: step 1/6. In terms of biological role, catalyzes the interconversion of methylthioribose-1-phosphate (MTR-1-P) into methylthioribulose-1-phosphate (MTRu-1-P). The protein is Methylthioribose-1-phosphate isomerase of Dehalococcoides mccartyi (strain CBDB1).